Consider the following 436-residue polypeptide: UPF0597 protein YhaM (436 aa).

Belongs to the UPF0597 family.

This chain is UPF0597 protein YhaM, found in Shigella sonnei (strain Ss046).